The primary structure comprises 267 residues: Phosphatidylglycerol--prolipoprotein diacylglyceryl transferase (267 aa).

7 helical membrane-spanning segments follow: residues 17-37 (LNIRWYGLMYILGFVAAWLLA), 56-76 (LVTYSVFGVILGGRLGYTLFY), 91-111 (IWNGGMSFHGGLLGVIIAIWL), 120-140 (LFEVGDFTAPLVAPGLLAGRL), 173-193 (QLYEAALEGVALFIILWLFSA), 199-219 (MAVSGMFLLLYGSFRFFVEFF), and 236-256 (MGQILCLPMILGGLVLVGFAM). Arg-139 is a binding site for a 1,2-diacyl-sn-glycero-3-phospho-(1'-sn-glycerol).

This sequence belongs to the Lgt family.

It localises to the cell inner membrane. It carries out the reaction L-cysteinyl-[prolipoprotein] + a 1,2-diacyl-sn-glycero-3-phospho-(1'-sn-glycerol) = an S-1,2-diacyl-sn-glyceryl-L-cysteinyl-[prolipoprotein] + sn-glycerol 1-phosphate + H(+). It functions in the pathway protein modification; lipoprotein biosynthesis (diacylglyceryl transfer). Functionally, catalyzes the transfer of the diacylglyceryl group from phosphatidylglycerol to the sulfhydryl group of the N-terminal cysteine of a prolipoprotein, the first step in the formation of mature lipoproteins. This is Phosphatidylglycerol--prolipoprotein diacylglyceryl transferase from Oleidesulfovibrio alaskensis (strain ATCC BAA-1058 / DSM 17464 / G20) (Desulfovibrio alaskensis).